The sequence spans 106 residues: Guanylate cyclase activator 2B (106 aa).

The N-terminal stretch at 1–21 (MSRSQLWAAVVLLLLLQSAQG) is a signal peptide. Residues 22–91 (VYIKYHGFQV…STFKALRTIA (70 aa)) constitute a propeptide that is removed on maturation. Cystine bridges form between Cys-62/Cys-75, Cys-95/Cys-103, and Cys-98/Cys-106.

Belongs to the guanylin family. Localized predominantly in intestinal villi and the corticomedullary junction of the kidney.

The protein localises to the secreted. Its function is as follows. Endogenous activator of intestinal guanylate cyclase. It stimulates this enzyme through the same receptor binding region as the heat-stable enterotoxins. May be a potent physiological regulator of intestinal fluid and electrolyte transport. May be an autocrine/paracrine regulator of intestinal salt and water transport. In Mus musculus (Mouse), this protein is Guanylate cyclase activator 2B (Guca2b).